The chain runs to 307 residues: tRNA dimethylallyltransferase 1 (307 aa).

ATP is bound at residue 11 to 18; sequence GPTASGKT. Position 13–18 (13–18) interacts with substrate; sequence TASGKT. 2 interaction with substrate tRNA regions span residues 36–39 and 159–163; these read DSRQ and QRAIR.

The protein belongs to the IPP transferase family. Monomer. Requires Mg(2+) as cofactor.

It catalyses the reaction adenosine(37) in tRNA + dimethylallyl diphosphate = N(6)-dimethylallyladenosine(37) in tRNA + diphosphate. Catalyzes the transfer of a dimethylallyl group onto the adenine at position 37 in tRNAs that read codons beginning with uridine, leading to the formation of N6-(dimethylallyl)adenosine (i(6)A). The polypeptide is tRNA dimethylallyltransferase 1 (Parabacteroides distasonis (strain ATCC 8503 / DSM 20701 / CIP 104284 / JCM 5825 / NCTC 11152)).